A 2524-amino-acid chain; its full sequence is Highly reducing polyketide synthase Preu5 (2524 aa).

Residues 5–426 (DTPIAIIGLS…GSNSAIVIEK (422 aa)) enclose the Ketosynthase family 3 (KS3) domain. Active-site for beta-ketoacyl synthase activity residues include Cys-175, His-310, and His-350. The segment at 431-470 (DELGHETNGTNGVSVSNGVNGSNGFTNGSNGTNGHAENGN) is disordered. The span at 437-464 (TNGTNGVSVSNGVNGSNGFTNGSNGTNG) shows a compositional bias: low complexity. A malonyl-CoA:ACP transacylase (MAT) domain region spans residues 559 to 882 (VFTGQGAQYA…TYLPSLVRNV (324 aa)). Ser-648 serves as the catalytic For malonyltransferase activity. The N-terminal hotdog fold stretch occupies residues 950–1084 (HELLGRRVVS…GQIEPEFADM (135 aa)). The PKS/mFAS DH domain occupies 950 to 1264 (HELLGRRVVS…FRNIGSADEN (315 aa)). Residues 950-1266 (HELLGRRVVS…NIGSADENID (317 aa)) form a dehydratase (DH) domain region. His-982 (proton acceptor; for dehydratase activity) is an active-site residue. A C-terminal hotdog fold region spans residues 1102–1264 (ADLLEHDIEG…FRNIGSADEN (163 aa)). Catalysis depends on Asp-1171, which acts as the Proton donor; for dehydratase activity. The segment at 1418–1611 (SQAVGDLADN…IPGVWDSEVQ (194 aa)) is methyltransferase (CMet) domain. Residues 1825 to 2139 (GSPDSIYFRR…SGDHLGKIVV (315 aa)) form an enoylreductase (ER) domain region. Positions 2164–2339 (GTYLVTGGTR…HTVSIALPIV (176 aa)) are ketoreductase (KR) domain. Positions 2445–2522 (DPLEGLTEAL…ALATDILSQR (78 aa)) constitute a Carrier domain. O-(pantetheine 4'-phosphoryl)serine is present on Ser-2482.

Pantetheine 4'-phosphate is required as a cofactor.

Its function is as follows. Highly reducing polyketide synthase; part of a gene cluster that mediates the biosynthesis of a yet unidentified natural product. This Preussia isomera (Coprophilous fungus) protein is Highly reducing polyketide synthase Preu5.